The chain runs to 1483 residues: Ubiquitin fusion degradation protein 4 (1483 aa).

The segment at 1-117 (MSENNSHNLD…NNEFGSNPLH (117 aa)) is disordered. Residues 8–18 (NLDEHESHSEN) show a composition bias toward basic and acidic residues. Residues 61–70 (EADDGEDDDN) are compositionally biased toward acidic residues. At T87 the chain carries Phosphothreonine. K349 is covalently cross-linked (Glycyl lysine isopeptide (Lys-Gly) (interchain with G-Cter in ubiquitin)). Positions 1007-1081 (CGVKSDSFIN…LIQLWKNKSK (75 aa)) are K-box. Positions 1376–1483 (AEHGYTMDSS…EEGAGAFLLS (108 aa)) constitute an HECT domain. C1450 (glycyl thioester intermediate) is an active-site residue.

It belongs to the UPL family. K-HECT subfamily.

The enzyme catalyses S-ubiquitinyl-[E2 ubiquitin-conjugating enzyme]-L-cysteine + [acceptor protein]-L-lysine = [E2 ubiquitin-conjugating enzyme]-L-cysteine + N(6)-ubiquitinyl-[acceptor protein]-L-lysine.. Its function is as follows. E3 ubiquitin-protein ligase which accepts ubiquitin from an E2 ubiquitin-conjugating enzyme in the form of a thioester and then directly transfers the ubiquitin to targeted substrates. The chain is Ubiquitin fusion degradation protein 4 (UFD4) from Saccharomyces cerevisiae (strain ATCC 204508 / S288c) (Baker's yeast).